The chain runs to 442 residues: Trigger factor (442 aa).

In terms of domain architecture, PPIase FKBP-type spans 163-248 (GDQVVIDFLG…IKEVKAPKAA (86 aa)).

Belongs to the FKBP-type PPIase family. Tig subfamily.

The protein resides in the cytoplasm. It catalyses the reaction [protein]-peptidylproline (omega=180) = [protein]-peptidylproline (omega=0). In terms of biological role, involved in protein export. Acts as a chaperone by maintaining the newly synthesized protein in an open conformation. Functions as a peptidyl-prolyl cis-trans isomerase. The sequence is that of Trigger factor from Dinoroseobacter shibae (strain DSM 16493 / NCIMB 14021 / DFL 12).